The chain runs to 138 residues: uncharacterized protein (138 aa).

The segment at 89-138 is disordered; sequence DDYEDDFEDSDFQDGDFDDFEDEDGFDDDDDFEDDDFEYEDEDNDLDFDE.

This is an uncharacterized protein from Treponema pallidum (strain Nichols).